Reading from the N-terminus, the 488-residue chain is Ribulose bisphosphate carboxylase large chain (488 aa).

Substrate contacts are provided by N128 and T178. K180 acts as the Proton acceptor in catalysis. K182 contributes to the substrate binding site. Residues K206, D208, and E209 each coordinate Mg(2+). Residue K206 is modified to N6-carboxylysine. Catalysis depends on H298, which acts as the Proton acceptor. R299, H331, and S383 together coordinate substrate.

Belongs to the RuBisCO large chain family. Type I subfamily. Heterohexadecamer of 8 large chains and 8 small chains. Mg(2+) is required as a cofactor.

It catalyses the reaction 2 (2R)-3-phosphoglycerate + 2 H(+) = D-ribulose 1,5-bisphosphate + CO2 + H2O. The enzyme catalyses D-ribulose 1,5-bisphosphate + O2 = 2-phosphoglycolate + (2R)-3-phosphoglycerate + 2 H(+). Its function is as follows. RuBisCO catalyzes two reactions: the carboxylation of D-ribulose 1,5-bisphosphate, the primary event in carbon dioxide fixation, as well as the oxidative fragmentation of the pentose substrate. Both reactions occur simultaneously and in competition at the same active site. The polypeptide is Ribulose bisphosphate carboxylase large chain (Xanthobacter autotrophicus (strain ATCC BAA-1158 / Py2)).